A 447-amino-acid polypeptide reads, in one-letter code: UDP-N-acetyl-alpha-D-muramoyl-L-alanyl-L-glutamate epimerase (447 aa).

Belongs to the MurL family.

The catalysed reaction is UDP-N-acetyl-alpha-D-muramoyl-L-alanyl-L-glutamate + ATP + H2O = UDP-N-acetyl-alpha-D-muramoyl-L-alanyl-D-glutamate + AMP + diphosphate + H(+). The protein operates within cell wall biogenesis; peptidoglycan biosynthesis. In terms of biological role, cell wall formation. Catalyzes epimerization of the terminal L-glutamate in UDP-N-acetyl-alpha-D-muramoyl-L-alanyl-L-glutamate. In Micromonospora sp. (strain ATCC 39149 / NRRL 15099 / SCC 1413), this protein is UDP-N-acetyl-alpha-D-muramoyl-L-alanyl-L-glutamate epimerase.